The sequence spans 356 residues: Carbohydrate sulfotransferase 10 (356 aa).

Over 1–6 (MHHQWL) the chain is Cytoplasmic. A helical; Signal-anchor for type II membrane protein transmembrane segment spans residues 7–27 (LLAACFWVIFMFMVASKFITL). The Lumenal segment spans residues 28–356 (TFKDPDVYSA…GYQKPDFLLN (329 aa)). N-linked (GlcNAc...) asparagine glycosylation is present at asparagine 99. 3'-phosphoadenylyl sulfate contacts are provided by residues 127-133 (PKVGNTQ) and 189-197 (RDPFERLIS). Residues asparagine 228 and asparagine 316 are each glycosylated (N-linked (GlcNAc...) asparagine).

It belongs to the sulfotransferase 2 family. In terms of tissue distribution, in fetal tissues, it is predominantly expressed in brain, and weakly expressed in lung, kidney and liver. In adult, it is highly expressed in brain, testis, ovary, expressed at intermediate level in heart, pancreas, skeletal muscle, spleen and thymus, and weakly expressed in other tissues. In brain, it is expressed at higher level in the frontal lobe.

Its subcellular location is the golgi apparatus membrane. The catalysed reaction is 3-O-{beta-D-GlcA-(1-&gt;[3)-alpha-D-Xyl-(1-&gt;3)-beta-D-GlcA-(1-&gt;](n)-4)-beta-D-Xyl-(1-&gt;4)-Rib-ol-P-Rib-ol-P-3-beta-D-GalNAc-(1-&gt;3)-beta-D-GlcNAc-(1-&gt;4)-O-6-P-alpha-D-Man}-L-Thr-[protein] + 3'-phosphoadenylyl sulfate = 3-O-{O-3-S-beta-D-GlcA-(1-&gt;[3)-alpha-D-Xyl-(1-&gt;3)-beta-D-GlcA-(1-&gt;](n)-4)-beta-D-Xyl-(1-&gt;4)-Rib-ol-P-Rib-ol-P-3-beta-D-GalNAc-(1-&gt;3)-beta-D-GlcNAc-(1-&gt;4)-O-6-P-alpha-D-Man}-L-Thr-[protein] + adenosine 3',5'-bisphosphate + H(+). It catalyses the reaction 17beta-estradiol 3-O-(beta-D-glucuronate) + 3'-phosphoadenylyl sulfate = 17beta-estradiol 3-O-(3-sulfo-beta-D-glucuronate) + adenosine 3',5'-bisphosphate + H(+). It carries out the reaction 17beta-estradiol 3-O-(beta-D-glucuronate) 17-sulfate + 3'-phosphoadenylyl sulfate = 17beta-estradiol 3-O-(3-sulfo-beta-D-glucuronate) 17-sulfate + adenosine 3',5'-bisphosphate + H(+). The enzyme catalyses 17beta-estradiol 17-O-(beta-D-glucuronate) + 3'-phosphoadenylyl sulfate = 17beta-estradiol 17-O-(3-sulfo-beta-D-glucuronate) + adenosine 3',5'-bisphosphate + H(+). The catalysed reaction is 16alpha,17beta-estriol 3-O-(beta-D-glucuronate) + 3'-phosphoadenylyl sulfate = 16alpha,17beta-estriol 3-O-(3-sulfo-beta-D-glucuronate) + adenosine 3',5'-bisphosphate + H(+). It catalyses the reaction 16alpha,17beta-estriol 16-O-(beta-D-glucuronate) + 3'-phosphoadenylyl sulfate = 16alpha,17beta-estriol 16-O-(3-sulfo-beta-D-glucuronate) + adenosine 3',5'-bisphosphate + H(+). It carries out the reaction 16alpha,17beta-estriol 17-O-(beta-D-glucuronate) + 3'-phosphoadenylyl sulfate = 16alpha,17beta-estriol 17-O-(3-sulfo-beta-D-glucuronate) + adenosine 3',5'-bisphosphate + H(+). The enzyme catalyses estrone 3-O-(beta-D-glucuronate) + 3'-phosphoadenylyl sulfate = estrone 3-O-(3-sulfo-beta-D-glucuronate) + adenosine 3',5'-bisphosphate + H(+). The catalysed reaction is 3alpha,20alpha-dihydroxy-5beta-pregnane 3-O-(beta-D-glucuronate) + 3'-phosphoadenylyl sulfate = 3alpha,20alpha-dihydroxy-5beta-pregnane 3-O-(3-sulfo-beta-D-glucuronate) + adenosine 3',5'-bisphosphate + H(+). It catalyses the reaction testosterone 17-O-(beta-D-glucuronate) + 3'-phosphoadenylyl sulfate = testosterone 17-O-(3-sulfo-beta-D-glucuronate) + adenosine 3',5'-bisphosphate + H(+). It carries out the reaction 3beta-androst-5-en-17-one 3-O-(beta-D-glucuronate) + 3'-phosphoadenylyl sulfate = 3beta-androst-5-en-17-one 3-O-(3-sulfo-beta-D-glucuronate) + adenosine 3',5'-bisphosphate + H(+). The enzyme catalyses 3alpha,17alpha-dihydroxy-5beta-androstane-11-one-17beta-carboxylate 3-O-(beta-D-glucuronate) + 3'-phosphoadenylyl sulfate = 3alpha,17alpha-dihydroxy-5beta-androstane-11-one-17beta-carboxylate 3-O-(3-sulfo-beta-D-glucuronate) + adenosine 3',5'-bisphosphate + H(+). The catalysed reaction is 3alpha-hydroxyetiocholan-17-one 3-O-(beta-D-glucuronate) + 3'-phosphoadenylyl sulfate = 3alpha-hydroxyetiocholan-17-one 3-O-(3-sulfo-beta-D-glucuronate) + adenosine 3',5'-bisphosphate + H(+). Its pathway is steroid metabolism. It participates in protein modification; carbohydrate sulfation. Catalyzes the transfer of sulfate from 3'-phosphoadenylyl sulfate (PAPS) to position 3 of terminal glucuronic acid of both protein- and lipid-linked oligosaccharides. Participates in biosynthesis of HNK-1 carbohydrate structure 3-O-sulfo-beta-D-GlcA-(1-&gt;3)-beta-D-Gal-(1-&gt;4)-D-GlcNAc-R, a sulfated glucuronyl-lactosaminyl residue carried by many neural recognition molecules, which is involved in cell interactions during ontogenetic development and in synaptic plasticity in the adult. May be indirectly involved in synapse plasticity of the hippocampus, via its role in HNK-1 biosynthesis. Sulfates terminal glucuronyl residue of the laminin globular (LG)-domain binding epitope on DAG1/alpha-dystroglycan and prevents further polymerization by LARGE1 glycosyltransferase. Likely defines the chain length of LG epitope, conferring binding specificity to extracellular matrix components. Plays a role in down-regulating the steroid hormones. Sulfates glucuronidated estrogens and androgens with an impact in hormone cycle and fertility. Has a preference for glucuronyl moiety at the 3-hydroxyl group of a sterol ring rather than the 17-hydroxyl group, showing high catalytic efficiency for 17beta-estradiol 3-O-(beta-D-glucuronate) and dehydroepiandrosterone 3-O-(beta-D-glucuronate) hormones. This Homo sapiens (Human) protein is Carbohydrate sulfotransferase 10.